A 496-amino-acid chain; its full sequence is Gasdermin-E (496 aa).

The tract at residues 1 to 56 (MFAKATRNFLREVDADGDLIAVSNLNDSDKLQLLSLVTKKKRFWCWQRPKYQFLSL) is membrane targeting domain. S-(2-succinyl)cysteine is present on C45. K120 is covalently cross-linked (Glycyl lysine isopeptide (Lys-Gly) (interchain with G-Cter in ubiquitin)). An S-(2-succinyl)cysteine mark is found at C156, C168, and C180. Residue K189 forms a Glycyl lysine isopeptide (Lys-Gly) (interchain with G-Cter in ubiquitin) linkage. S-(2-succinyl)cysteine occurs at positions 235, 371, 408, 417, and 489.

Belongs to the gasdermin family. In terms of assembly, homooligomer; homooligomeric ring-shaped pore complex containing 27-28 subunits when inserted in the membrane. Cleavage at Asp-270 by CASP3 (mature and uncleaved precursor forms) or granzyme B (GZMB) relieves autoinhibition and is sufficient to initiate pyroptosis. In terms of processing, succination by the Krebs cycle intermediate fumarate, which leads to S-(2-succinyl)cysteine residues, inhibits processing by caspases, and ability to initiate pyroptosis. Succination modification is catalyzed by a non-enzymatic reaction caused by an accumulation of fumarate. Post-translationally, ubiquitinated at Lys-120 and Lys-189 via 'Lys-48'-linked polyubiquitin chains, leading to proteasomal degradation. Deubiquitinated by USP48, leading to increased stability. Palmitoylated. In terms of tissue distribution, expressed in cochlea. Low level of expression in heart, brain, placenta, lung, liver, skeletal muscle, kidney and pancreas, with highest expression in placenta.

The protein resides in the cell membrane. Its subcellular location is the cytoplasm. It is found in the cytosol. With respect to regulation, the full-length protein before cleavage is inactive: intramolecular interactions between N- and C-terminal domains mediate autoinhibition in the absence of activation signal. The intrinsic pyroptosis-inducing activity is carried by the released N-terminal moiety (Gasdermin-E, N-terminal) following cleavage by CASP3 or granzyme B (GZMB). Activated by NLRP1 in the absence of GSDMD expression: NLRP1 cleaves and activates CASP8, promoting downstream activation of CASP3 and subsequent activation of GSDME. Its activity is regulated as follows. (Microbial infection) Activated upon human coronavirus SARS-CoV-2 infection, leading to lung epithelial cell death. Activation takes place in response to (1) activation of NLRP1 and (2) inactivation of GSDMD following NLRP1 and GSDMD cleavage by the SARS-CoV-2 3C-like proteinase nsp5. In terms of biological role, precursor of a pore-forming protein that converts non-inflammatory apoptosis to pyroptosis. This form constitutes the precursor of the pore-forming protein: upon cleavage, the released N-terminal moiety (Gasdermin-E, N-terminal) binds to membranes and forms pores, triggering pyroptosis. Functionally, pore-forming protein produced by cleavage by CASP3 or granzyme B (GZMB), which converts non-inflammatory apoptosis to pyroptosis or promotes granzyme-mediated pyroptosis, respectively. After cleavage, moves to the plasma membrane, homooligomerizes within the membrane and forms pores of 10-15 nanometers (nm) of inner diameter, allowing the release of mature interleukins (IL1B and IL16) and triggering pyroptosis. Binds to inner leaflet lipids, bisphosphorylated phosphatidylinositols, such as phosphatidylinositol (4,5)-bisphosphate. Cleavage by CASP3 switches CASP3-mediated apoptosis induced by TNF or danger signals, such as chemotherapy drugs, to pyroptosis. Mediates secondary necrosis downstream of the mitochondrial apoptotic pathway and CASP3 activation as well as in response to viral agents. Exhibits bactericidal activity. Cleavage by GZMB promotes tumor suppressor activity by triggering robust anti-tumor immunity. Suppresses tumors by mediating granzyme-mediated pyroptosis in target cells of natural killer (NK) cells: cleavage by granzyme B (GZMB), delivered to target cells from NK-cells, triggers pyroptosis of tumor cells and tumor suppression. May play a role in the p53/TP53-regulated cellular response to DNA damage. Its function is as follows. (Microbial infection) Pore-forming protein, which promotes maternal placental pyroptosis in response to Zika virus infection, contributing to adverse fetal outcomes. The sequence is that of Gasdermin-E from Homo sapiens (Human).